Consider the following 66-residue polypeptide: SPbeta prophage-derived uncharacterized protein YopM (66 aa).

This chain is SPbeta prophage-derived uncharacterized protein YopM (yopM), found in Bacillus subtilis (strain 168).